A 491-amino-acid chain; its full sequence is MDRKTMTISAWRQQLQNGDISSRELVDQHIERLETAEPSLSVYNEITVERARADADRIDAARAAGESLGPLAGLPLAIKDNLCTRGVRTTCSSRMLEHFVPPYESTATERLWQAGGVLVGKTNLDEFAMGGSTETSAFGATHNPWNLDHVPGGSSGGSAAAVASGSCIASLGSDTGGSIRQPASFCGVVGLKPTYGRVSRWGLVAFASSLDQVGPFATSVADAAELLQVIAGPDPRDSTCLNVEVPDYSAGLNQSIKGLKVGVIKECFDAKGLDGEVNASVRAAAAQLEALGAELVEVSCPRFNDGIATYYVIAPSEASANLARYDGVKYGFRAADAESLATMTSSSRAEGFGEEVQRRILIGTYALSAGYVDAYYKKAQQVRTLIRRDFDAAFQSVDVLLTPTAPSPAFKAGAHKDDPLAMYLADLLTIPVNLAGLPAISVPCGFSQTGLPIGVQLIGNVLDEARLLQVAHQYEQAADVLSQRPKAPLVP.

Active-site charge relay system residues include Lys79 and Ser154. The Acyl-ester intermediate role is filled by Ser178.

It belongs to the amidase family. GatA subfamily. As to quaternary structure, heterotrimer of A, B and C subunits.

It catalyses the reaction L-glutamyl-tRNA(Gln) + L-glutamine + ATP + H2O = L-glutaminyl-tRNA(Gln) + L-glutamate + ADP + phosphate + H(+). Functionally, allows the formation of correctly charged Gln-tRNA(Gln) through the transamidation of misacylated Glu-tRNA(Gln) in organisms which lack glutaminyl-tRNA synthetase. The reaction takes place in the presence of glutamine and ATP through an activated gamma-phospho-Glu-tRNA(Gln). The protein is Glutamyl-tRNA(Gln) amidotransferase subunit A of Synechococcus sp. (strain CC9902).